The sequence spans 126 residues: MQRNMLKSKLHRVTTTHAELHYIGSCAIDENLLEAADILEYEEVQIWNVTNGERFATYAIKAERGSGVISVNGSAARRAAPGDLLIIASFAQYEDAELKGHSPKLVFVDGDNRLTEVKGATPTQPA.

The Schiff-base intermediate with substrate; via pyruvic acid role is filled by Ser-25. The residue at position 25 (Ser-25) is a Pyruvic acid (Ser). Residue Thr-57 participates in substrate binding. Residue Tyr-58 is the Proton donor of the active site. Substrate is bound at residue 73-75 (GSA).

It belongs to the PanD family. In terms of assembly, heterooctamer of four alpha and four beta subunits. Pyruvate serves as cofactor. Is synthesized initially as an inactive proenzyme, which is activated by self-cleavage at a specific serine bond to produce a beta-subunit with a hydroxyl group at its C-terminus and an alpha-subunit with a pyruvoyl group at its N-terminus.

Its subcellular location is the cytoplasm. It carries out the reaction L-aspartate + H(+) = beta-alanine + CO2. It functions in the pathway cofactor biosynthesis; (R)-pantothenate biosynthesis; beta-alanine from L-aspartate: step 1/1. Functionally, catalyzes the pyruvoyl-dependent decarboxylation of aspartate to produce beta-alanine. In Chromobacterium violaceum (strain ATCC 12472 / DSM 30191 / JCM 1249 / CCUG 213 / NBRC 12614 / NCIMB 9131 / NCTC 9757 / MK), this protein is Aspartate 1-decarboxylase.